The chain runs to 140 residues: 3-hydroxyacyl-[acyl-carrier-protein] dehydratase FabZ (140 aa).

The active site involves H47.

This sequence belongs to the thioester dehydratase family. FabZ subfamily.

It is found in the cytoplasm. It catalyses the reaction a (3R)-hydroxyacyl-[ACP] = a (2E)-enoyl-[ACP] + H2O. Functionally, involved in unsaturated fatty acids biosynthesis. Catalyzes the dehydration of short chain beta-hydroxyacyl-ACPs and long chain saturated and unsaturated beta-hydroxyacyl-ACPs. The sequence is that of 3-hydroxyacyl-[acyl-carrier-protein] dehydratase FabZ from Streptococcus pneumoniae (strain CGSP14).